The chain runs to 337 residues: Probable allantoicase 1 (337 aa).

This sequence belongs to the allantoicase family.

It carries out the reaction allantoate + H2O = (S)-ureidoglycolate + urea. Its pathway is nitrogen metabolism; (S)-allantoin degradation; (S)-ureidoglycolate from allantoate (aminidohydrolase route): step 1/1. The sequence is that of Probable allantoicase 1 from Burkholderia mallei (strain ATCC 23344).